The primary structure comprises 218 residues: Oxygen regulatory protein NreC (218 aa).

The region spanning 2–119 is the Response regulatory domain; that stretch reads KIVIADDHAV…QLILAVRTVY (118 aa). At aspartate 53 the chain carries 4-aspartylphosphate. An HTH luxR-type domain is found at 149–214; it reads SSDPFKILSK…ELVEYALKKK (66 aa). Residues 173-192 constitute a DNA-binding region (H-T-H motif); the sequence is NKDIAEKLFVSVKTVEAHKT.

In terms of processing, phosphorylated by NreB.

The protein resides in the cytoplasm. In terms of biological role, member of the two-component regulatory system NreB/NreC involved in the control of dissimilatory nitrate/nitrite reduction in response to oxygen. Phosphorylated NreC binds to a GC-rich palindromic sequence at the promoters of the nitrate (narGHJI) and nitrite (nir) reductase operons, as well as the putative nitrate transporter gene narT, and activates their expression. The polypeptide is Oxygen regulatory protein NreC (nreC) (Staphylococcus epidermidis (strain ATCC 35984 / DSM 28319 / BCRC 17069 / CCUG 31568 / BM 3577 / RP62A)).